The primary structure comprises 507 residues: 2,3-bisphosphoglycerate-independent phosphoglycerate mutase (507 aa).

Mn(2+) contacts are provided by D13 and S63. S63 functions as the Phosphoserine intermediate in the catalytic mechanism. Substrate-binding positions include H124, 153 to 154 (RD), R183, R189, 254 to 257 (RADR), and K330. Mn(2+)-binding residues include D396, H400, D437, H438, and H456.

Belongs to the BPG-independent phosphoglycerate mutase family. Monomer. It depends on Mn(2+) as a cofactor.

It carries out the reaction (2R)-2-phosphoglycerate = (2R)-3-phosphoglycerate. It functions in the pathway carbohydrate degradation; glycolysis; pyruvate from D-glyceraldehyde 3-phosphate: step 3/5. Its function is as follows. Catalyzes the interconversion of 2-phosphoglycerate and 3-phosphoglycerate. This Paracoccus denitrificans (strain Pd 1222) protein is 2,3-bisphosphoglycerate-independent phosphoglycerate mutase.